Consider the following 242-residue polypeptide: Ribonuclease PH (242 aa).

Phosphate is bound by residues Arg89 and 127–129 (GTR).

Belongs to the RNase PH family. In terms of assembly, homohexameric ring arranged as a trimer of dimers.

It catalyses the reaction tRNA(n+1) + phosphate = tRNA(n) + a ribonucleoside 5'-diphosphate. Functionally, phosphorolytic 3'-5' exoribonuclease that plays an important role in tRNA 3'-end maturation. Removes nucleotide residues following the 3'-CCA terminus of tRNAs; can also add nucleotides to the ends of RNA molecules by using nucleoside diphosphates as substrates, but this may not be physiologically important. Probably plays a role in initiation of 16S rRNA degradation (leading to ribosome degradation) during starvation. The sequence is that of Ribonuclease PH from Neisseria gonorrhoeae (strain ATCC 700825 / FA 1090).